Here is a 232-residue protein sequence, read N- to C-terminus: 2,3,4,5-tetrahydropyridine-2,6-dicarboxylate N-acetyltransferase (232 aa).

Belongs to the transferase hexapeptide repeat family. DapH subfamily.

It catalyses the reaction (S)-2,3,4,5-tetrahydrodipicolinate + acetyl-CoA + H2O = L-2-acetamido-6-oxoheptanedioate + CoA. It participates in amino-acid biosynthesis; L-lysine biosynthesis via DAP pathway; LL-2,6-diaminopimelate from (S)-tetrahydrodipicolinate (acetylase route): step 1/3. Its function is as follows. Catalyzes the transfer of an acetyl group from acetyl-CoA to tetrahydrodipicolinate. In Streptococcus uberis (strain ATCC BAA-854 / 0140J), this protein is 2,3,4,5-tetrahydropyridine-2,6-dicarboxylate N-acetyltransferase.